A 279-amino-acid chain; its full sequence is Undecaprenyl-diphosphatase (279 aa).

The next 8 membrane-spanning stretches (helical) occupy residues 1–21 (MVLEAVLLGIVQGITEFLPIS), 39–59 (GRFFLSSVQLGTSFALILYFF), 96–116 (LLLVTGTIPVVLLGFLLVRFV), 128–148 (FTMGVALIVFGLLLGFADALF), 155–175 (IFQITFIESVLIGAAQVFAII), 201–221 (FSFLLSLPVTFIGGMYGLVAG), 231–251 (YSLIGAIVSFVVGLLVVSALL), and 259–279 (FVLFVYYRVLFGLFLVIVSFF).

It belongs to the UppP family.

It is found in the cell membrane. The enzyme catalyses di-trans,octa-cis-undecaprenyl diphosphate + H2O = di-trans,octa-cis-undecaprenyl phosphate + phosphate + H(+). Functionally, catalyzes the dephosphorylation of undecaprenyl diphosphate (UPP). Confers resistance to bacitracin. This Tropheryma whipplei (strain Twist) (Whipple's bacillus) protein is Undecaprenyl-diphosphatase.